The primary structure comprises 392 residues: S-adenosylmethionine synthase (392 aa).

His17 provides a ligand contact to ATP. A Mg(2+)-binding site is contributed by Asp19. Glu45 is a binding site for K(+). L-methionine-binding residues include Glu58 and Gln102. The interval 102–112 (QSADIAQGVDA) is flexible loop. Residues 169–171 (DAK), 235–236 (KF), Asp244, 250–251 (RK), Ala267, and Lys271 each bind ATP. Asp244 provides a ligand contact to L-methionine. An L-methionine-binding site is contributed by Lys275.

Belongs to the AdoMet synthase family. Homotetramer; dimer of dimers. It depends on Mg(2+) as a cofactor. K(+) serves as cofactor.

The protein resides in the cytoplasm. The catalysed reaction is L-methionine + ATP + H2O = S-adenosyl-L-methionine + phosphate + diphosphate. It functions in the pathway amino-acid biosynthesis; S-adenosyl-L-methionine biosynthesis; S-adenosyl-L-methionine from L-methionine: step 1/1. Functionally, catalyzes the formation of S-adenosylmethionine (AdoMet) from methionine and ATP. The overall synthetic reaction is composed of two sequential steps, AdoMet formation and the subsequent tripolyphosphate hydrolysis which occurs prior to release of AdoMet from the enzyme. In Methylobacterium radiotolerans (strain ATCC 27329 / DSM 1819 / JCM 2831 / NBRC 15690 / NCIMB 10815 / 0-1), this protein is S-adenosylmethionine synthase.